The sequence spans 635 residues: MMVPLLLSTYFITAVYGATHTFHWTTGWGNRNVDGIKERPVITCNGEYPWPDVRVAKGDRIEVYLTNGFNNTNTSLHFHGMFQRGTNQMDGVPYLTQCPIGPGDTMLYNFTVDENVGTYWYHSHTDGQYEDGMRGLFVIEDGENNKNFPYEYDEDVMLSIGEWYDTTVDVLTRKFLNLNNPTGAEPIPQNLILNNTMNLTWEVQPDTTYLLRIVNVGGFVSQYFWIEDHEMEVVEVDGVYVEKNTTNMLYITVAQRYAVLVHTKNDTSKNFAIMQKFDDTMLDVIPKDLQLNATSYLVYDKSKPMPEQNYVDSIDDYLDDFYLVPMDKEELYPEADHVITIDVIMDNLINGVNYAFFNNITYTTPKVPTLLTVLSAGQDALNPFIYGTNTNTFVLKKGEVVDLIVNNQDTGKHPFHLHGHVFQTILRDREFDDAKGEKPHSFNDSDHAAYPSIPMKRDTVYLNPQSNMVLRFKADNPGVWFFHCHIEWHLLQGLAVVMVEDPISIQNTASQHLTANGLQVCGNVKVPTQGNAAANDSDFFNLEGQNVQHKSIPTGFTKKGIIAMTFSCLAGVLGITMIAIYGFSEIPEPEIKVMRNLHLNPEDVLEKTSSSSVISASNSSSLEDSRNQKKKFIFF.

An N-terminal signal peptide occupies residues 1–17; it reads MMVPLLLSTYFITAVYG. Residues 18 to 559 are Extracellular-facing; it reads ATHTFHWTTG…KSIPTGFTKK (542 aa). 2 consecutive Plastocyanin-like domains span residues 42–140 and 190–292; these read ITCN…FVIE and NLIL…LQLN. N-linked (GlcNAc...) asparagine glycosylation is found at Asn-70 and Asn-73. Positions 77 and 79 each coordinate Cu cation. N-linked (GlcNAc...) asparagine glycosylation occurs at Asn-109. 2 residues coordinate Cu cation: His-122 and His-124. Asn-194, Asn-198, Asn-244, Asn-265, Asn-292, and Asn-359 each carry an N-linked (GlcNAc...) asparagine glycan. The Plastocyanin-like 3 domain occupies 382–501; sequence NPFIYGTNTN…QGLAVVMVED (120 aa). Cu cation is bound by residues His-413, His-416, and His-418. Residue Asn-443 is glycosylated (N-linked (GlcNAc...) asparagine). His-483, Cys-484, His-485, and His-489 together coordinate Cu cation. A glycan (N-linked (GlcNAc...) asparagine) is linked at Asn-535. The chain crosses the membrane as a helical span at residues 560-580; that stretch reads GIIAMTFSCLAGVLGITMIAI. The Cytoplasmic portion of the chain corresponds to 581–628; the sequence is YGFSEIPEPEIKVMRNLHLNPEDVLEKTSSSSVISASNSSSLEDSRNQ.

This sequence belongs to the multicopper oxidase family. The cofactor is Cu cation.

The protein resides in the cell membrane. Iron transport multicopper ferroxidase required for Fe(2+) high affinity uptake. Required to oxidize Fe(2+) and release it from the transporter. Essential component of copper-dependent iron transport. The polypeptide is Iron transport multicopper oxidase FET3 (FET3) (Candida glabrata (strain ATCC 2001 / BCRC 20586 / JCM 3761 / NBRC 0622 / NRRL Y-65 / CBS 138) (Yeast)).